Here is a 333-residue protein sequence, read N- to C-terminus: tRNA N6-adenosine threonylcarbamoyltransferase (333 aa).

2 residues coordinate Fe cation: H110 and H114. Residues 133–137 (IVSGG), D166, G179, D183, and N275 contribute to the substrate site. D302 contacts Fe cation.

It belongs to the KAE1 / TsaD family. Fe(2+) is required as a cofactor.

Its subcellular location is the cytoplasm. The catalysed reaction is L-threonylcarbamoyladenylate + adenosine(37) in tRNA = N(6)-L-threonylcarbamoyladenosine(37) in tRNA + AMP + H(+). Its function is as follows. Required for the formation of a threonylcarbamoyl group on adenosine at position 37 (t(6)A37) in tRNAs that read codons beginning with adenine. Is involved in the transfer of the threonylcarbamoyl moiety of threonylcarbamoyl-AMP (TC-AMP) to the N6 group of A37, together with TsaE and TsaB. TsaD likely plays a direct catalytic role in this reaction. In Thermodesulfovibrio yellowstonii (strain ATCC 51303 / DSM 11347 / YP87), this protein is tRNA N6-adenosine threonylcarbamoyltransferase.